The primary structure comprises 325 residues: 5-dehydro-2-deoxygluconokinase (325 aa).

Belongs to the carbohydrate kinase PfkB family.

It carries out the reaction 5-dehydro-2-deoxy-D-gluconate + ATP = 6-phospho-5-dehydro-2-deoxy-D-gluconate + ADP + H(+). The protein operates within polyol metabolism; myo-inositol degradation into acetyl-CoA; acetyl-CoA from myo-inositol: step 5/7. Its function is as follows. Catalyzes the phosphorylation of 5-dehydro-2-deoxy-D-gluconate (2-deoxy-5-keto-D-gluconate or DKG) to 6-phospho-5-dehydro-2-deoxy-D-gluconate (DKGP). This is 5-dehydro-2-deoxygluconokinase from Listeria monocytogenes serovar 1/2a (strain ATCC BAA-679 / EGD-e).